The sequence spans 185 residues: UPF0301 protein Shew_1144 (185 aa).

Belongs to the UPF0301 (AlgH) family.

The polypeptide is UPF0301 protein Shew_1144 (Shewanella loihica (strain ATCC BAA-1088 / PV-4)).